We begin with the raw amino-acid sequence, 90 residues long: Probable Fe(2+)-trafficking protein (90 aa).

This sequence belongs to the Fe(2+)-trafficking protein family.

In terms of biological role, could be a mediator in iron transactions between iron acquisition and iron-requiring processes, such as synthesis and/or repair of Fe-S clusters in biosynthetic enzymes. The sequence is that of Probable Fe(2+)-trafficking protein from Pseudomonas fluorescens (strain ATCC BAA-477 / NRRL B-23932 / Pf-5).